The chain runs to 317 residues: Carbamate kinase (317 aa).

Belongs to the carbamate kinase family. Homodimer.

It catalyses the reaction hydrogencarbonate + NH4(+) + ATP = carbamoyl phosphate + ADP + H2O + H(+). It participates in metabolic intermediate metabolism; carbamoyl phosphate degradation; CO(2) and NH(3) from carbamoyl phosphate: step 1/1. The protein is Carbamate kinase (CBK) of Giardia intestinalis (Giardia lamblia).